A 2279-amino-acid chain; its full sequence is Zinc finger protein 318 (2279 aa).

2 stretches are compositionally biased toward low complexity: residues 1–12 (MYRSSARSSVSS) and 25–39 (SGRS…ARRS). 2 disordered regions span residues 1–140 (MYRS…PGLC) and 164–189 (RRRL…LTDD). The interaction with AR stretch occupies residues 1-1092 (MYRSSARSSV…THMHNKKHTQ (1092 aa)). Ser40 is subject to Phosphoserine. Basic residues predominate over residues 53 to 67 (PARRPRSPSGHRGRR). Phosphoserine occurs at positions 79 and 81. Residues 110-132 (SRGESRADYARDGRGDHPGDSGS) are compositionally biased toward basic and acidic residues. Ser136 and Ser173 each carry phosphoserine. A compositionally biased stretch (acidic residues) spans 177-188 (NLEDMDRDDLTD). At Tyr205 the chain carries Phosphotyrosine. Ser207 and Ser214 each carry phosphoserine. Disordered stretches follow at residues 279–346 (TVKI…DGGG) and 397–416 (LESF…YSGH). Over residues 311-333 (LDPEFRELDLARRKREEEEERSR) the composition is skewed to basic and acidic residues. Residues 315–343 (FRELDLARRKREEEEERSRSLSQELVGVD) adopt a coiled-coil conformation. Phosphoserine occurs at positions 464, 472, 501, and 527. 2 disordered regions span residues 514–533 (LADS…DIED) and 540–570 (GDEE…ASSL). Glycyl lysine isopeptide (Lys-Gly) (interchain with G-Cter in SUMO2) cross-links involve residues Lys547, Lys553, Lys566, and Lys578. The span at 664–683 (FSADRRSSDPHRLESREAHH) shows a compositional bias: basic and acidic residues. Residues 664 to 709 (FSADRRSSDPHRLESREAHHSNTHSPEVSHPHPPSPVDPYLLTKNS) form a disordered region. Thr842 carries the phosphothreonine modification. Positions 876-980 (EKISDEKNRA…SELDKVAQIL (105 aa)) form a coiled coil. Composition is skewed to basic and acidic residues over residues 922–941 (QQGE…KDPL) and 989–1012 (QKSL…KSPE). Disordered regions lie at residues 922–942 (QQGE…DPLL) and 989–1051 (QKSL…TKQL). Phosphoserine is present on Ser1010. Residues 1013–1023 (KVSSFSNSSSN) show a composition bias toward low complexity. Positions 1024-1034 (KESKVNNEKFR) are enriched in basic and acidic residues. Position 1037 is a phosphoserine (Ser1037). Matrin-type zinc fingers lie at residues 1063-1097 (AGNH…LDPY) and 1136-1166 (FYCQ…KYKK). Composition is skewed to basic and acidic residues over residues 1195 to 1235 (RRQS…KLED), 1242 to 1251 (NSPEKAENKR), 1258 to 1267 (QLKEEVKKES), 1279 to 1288 (KKPEKEEEKS), and 1296 to 1316 (SKEE…EAGK). A disordered region spans residues 1195–1319 (RRQSELKRKL…GKTEAGKAKP (125 aa)). Phosphoserine is present on residues Ser1243 and Ser1267. Ser1420 carries the phosphoserine modification. Disordered stretches follow at residues 1428 to 1463 (AEKS…HPAA), 1577 to 1628 (GKGA…EELH), 1702 to 1735 (SSFQ…PPQL), and 1753 to 1775 (ESVN…ESEI). The span at 1440 to 1462 (ILPPPPPPPPPPPPPPPVIPHPA) shows a compositional bias: pro residues. The segment covering 1602-1623 (SNLSRTKSSDTSSTSPLNSSAS) has biased composition (low complexity). Residues 1708 to 1719 (TSRDISPEKSEL) show a composition bias toward basic and acidic residues. Ser1713 carries the post-translational modification Phosphoserine. Residues 1724–1734 (PGPPGVEPPPQ) are compositionally biased toward pro residues. The stretch at 1768–1792 (EDCRESEIETNTELKERVKELSEGI) forms a coiled coil. Residues Ser1856, Ser1896, Ser1971, Ser2030, Ser2035, Ser2091, Ser2101, Ser2189, Ser2192, and Ser2243 each carry the phosphoserine modification. The segment at 2252–2279 (DNMVPQGMPEQETTVGAIQDHTESSVHN) is disordered.

As to quaternary structure, homodimer. Heterodimer of isoform 1 and isoform 2. Isoform 1 and isoform 2 interact with AR. In terms of tissue distribution, expressed in endocrine tissue.

The protein localises to the nucleus. In terms of biological role, acts as a transcriptional corepressor for AR-mediated transactivation function. May act as a transcriptional regulator during spermatogenesis and, in particular, during meiotic division. Acts as a transcriptional coactivator for AR-mediated transactivation function. May act as a transcriptional regulator during spermatogenesis and, in particular, during meiotic division. This Homo sapiens (Human) protein is Zinc finger protein 318 (ZNF318).